Consider the following 499-residue polypeptide: Aspartyl/glutamyl-tRNA(Asn/Gln) amidotransferase subunit B (499 aa).

It belongs to the GatB/GatE family. GatB subfamily. As to quaternary structure, heterotrimer of A, B and C subunits.

The enzyme catalyses L-glutamyl-tRNA(Gln) + L-glutamine + ATP + H2O = L-glutaminyl-tRNA(Gln) + L-glutamate + ADP + phosphate + H(+). It carries out the reaction L-aspartyl-tRNA(Asn) + L-glutamine + ATP + H2O = L-asparaginyl-tRNA(Asn) + L-glutamate + ADP + phosphate + 2 H(+). Its function is as follows. Allows the formation of correctly charged Asn-tRNA(Asn) or Gln-tRNA(Gln) through the transamidation of misacylated Asp-tRNA(Asn) or Glu-tRNA(Gln) in organisms which lack either or both of asparaginyl-tRNA or glutaminyl-tRNA synthetases. The reaction takes place in the presence of glutamine and ATP through an activated phospho-Asp-tRNA(Asn) or phospho-Glu-tRNA(Gln). The chain is Aspartyl/glutamyl-tRNA(Asn/Gln) amidotransferase subunit B from Bartonella tribocorum (strain CIP 105476 / IBS 506).